Reading from the N-terminus, the 232-residue chain is Large ribosomal subunit protein uL1 (232 aa).

The protein belongs to the universal ribosomal protein uL1 family. In terms of assembly, part of the 50S ribosomal subunit.

Its function is as follows. Binds directly to 23S rRNA. The L1 stalk is quite mobile in the ribosome, and is involved in E site tRNA release. Functionally, protein L1 is also a translational repressor protein, it controls the translation of the L11 operon by binding to its mRNA. In Alkaliphilus oremlandii (strain OhILAs) (Clostridium oremlandii (strain OhILAs)), this protein is Large ribosomal subunit protein uL1.